Consider the following 1179-residue polypeptide: Probable manganese-transporting ATPase PDR2 (1179 aa).

The Cytoplasmic segment spans residues 1–20; that stretch reads MSSFRVGGKVVEKVDLCRKK. Residues 21-42 form a helical membrane-spanning segment; that stretch reads QLVWRLDVWPFAILYTVWLTTI. Topologically, residues 43 to 50 are lumenal; it reads VPSIDFSD. A helical membrane pass occupies residues 51-71; sequence ACIALGGLSAFHILVLLFTTW. Topologically, residues 72-192 are cytoplasmic; it reads SVDFKCFVQF…FDYPQPTFQK (121 aa). A helical transmembrane segment spans residues 193-215; that stretch reads LMKENCMEPFFVFQVFCVGLWCL. Over 216–218 the chain is Lumenal; that stretch reads DEF. Residues 219–238 form a helical membrane-spanning segment; sequence WYYSVFTLFMLFMFESTMAK. Topologically, residues 239-402 are cytoplasmic; sequence SRLKTLTDLR…ERVTANSWES (164 aa). Residues 403 to 422 form a helical membrane-spanning segment; that stretch reads GLFILFLVVFAVIAAGYVLV. At 423–435 the chain is on the lumenal side; that stretch reads KGLEDPTRSKYKL. The helical transmembrane segment at 436–453 threads the bilayer; it reads LLGCSLIITSVIPPELPM. Residues 454 to 947 lie on the Cytoplasmic side of the membrane; the sequence is ELSIAVNTSL…RQGRSTLVTT (494 aa). The active-site 4-aspartylphosphate intermediate is Asp491. Mg(2+) is bound by residues Asp812 and Asp816. Positions 833-880 are disordered; sequence KLPLSPSDSSKDDKSKSKKSKLPLEPASKTITQNGEGSSKGKIPPQNR. The chain crosses the membrane as a helical span at residues 948 to 967; the sequence is LQMFKILGLNCLATAYVLSV. At 968 to 979 the chain is on the lumenal side; the sequence is MYLDGVKLGDVQ. The chain crosses the membrane as a helical span at residues 980–997; the sequence is ATISGVLTAAFFLFISHA. Residues 998 to 1013 are Cytoplasmic-facing; that stretch reads RPLQTLSAERPHPSVF. Residues 1014–1034 traverse the membrane as a helical segment; sequence SVYLFLSLIGQFAVHLTFLVY. Topologically, residues 1035 to 1059 are lumenal; it reads SVKEAEKHMPEECIEPDASFHPNLV. The helical transmembrane segment at 1060–1079 threads the bilayer; the sequence is NTVSYMVSMMLQVATFAVNY. The Cytoplasmic portion of the chain corresponds to 1080–1092; sequence MGHPFNQSIRENK. A helical transmembrane segment spans residues 1093 to 1110; the sequence is PFFYALIAGAGFFTVIAS. At 1111–1128 the chain is on the lumenal side; the sequence is DLFRDLNDSLKLVPLPQG. A helical membrane pass occupies residues 1129–1148; the sequence is LRDKLLIWASLMFIICYSWE. The Cytoplasmic segment spans residues 1149-1179; it reads RLLRWAFPGKISSWKHKQRAVTANLEKKKKV.

It belongs to the cation transport ATPase (P-type) (TC 3.A.3) family. Type V subfamily. In terms of tissue distribution, highly expressed in root meristem. Expressed in pavement cells of trichomes, stipules, stamens and pollen grains.

It localises to the endoplasmic reticulum membrane. The catalysed reaction is ATP + H2O = ADP + phosphate + H(+). In terms of biological role, mediates manganese transport into the endoplasmic reticulum. The ATPase activity is required for cellular manganese homeostasis. Plays an important role in pollen and root development through its impact on protein secretion and transport processes. Functions together with LPR1 and LPR2 in a common pathway that adjusts root meristem activity to phosphate availability. Under phosphate limitation, restricts SHR movement in root meristem and is required for maintaining SCR expression in the root meristem stem-cell niche as well as for proximal meristem activity. Can complement the yeast spf1 mutant. The polypeptide is Probable manganese-transporting ATPase PDR2 (PDR2) (Arabidopsis thaliana (Mouse-ear cress)).